Consider the following 546-residue polypeptide: Chaperonin GroEL 1 (546 aa).

Residues 30-33, Lys-51, 87-91, Gly-415, 479-481, and Asp-495 each bind ATP; these read TLGP, DGTTT, and NAA. The tract at residues 526-546 is disordered; that stretch reads KEDAPMPGGMPGGMGGMGMDM. Positions 534–546 are enriched in gly residues; that stretch reads GMPGGMGGMGMDM.

The protein belongs to the chaperonin (HSP60) family. Forms a cylinder of 14 subunits composed of two heptameric rings stacked back-to-back. Interacts with the co-chaperonin GroES.

The protein localises to the cytoplasm. It catalyses the reaction ATP + H2O + a folded polypeptide = ADP + phosphate + an unfolded polypeptide.. In terms of biological role, together with its co-chaperonin GroES, plays an essential role in assisting protein folding. The GroEL-GroES system forms a nano-cage that allows encapsulation of the non-native substrate proteins and provides a physical environment optimized to promote and accelerate protein folding. This is Chaperonin GroEL 1 from Burkholderia vietnamiensis (strain G4 / LMG 22486) (Burkholderia cepacia (strain R1808)).